A 432-amino-acid chain; its full sequence is MTDALNTKRSEEIFGAAKNLMPGGVSSPVRAFKSVEGDPIVFDRVKGPYAWDVDGNRYIDYVGSWGPAICGHAHPEVIAALQETLEKGTSFGAPCVLENQLAEMVIDAVPSVEMVRFVNSGTEACMAVLRLMRAFTGRDKVIKFEGCYHGHADMFLVKAGSGVATLGLPDSPGVPRSTTANTLTAPYNDLEAVKELFAENPDAISGVILEPVVGNAGFITPEPGFLEGLREVTQENGALLVFDEVMTGFRISYGGAQERFGVTPDLTTMGKVIGGGLPVGAYGGRKEIMSMVSPSGPMYQAGTLSGNPLAMTAGIKTLELLKQEGTYEKLEAITKKLLDGILTAAKESNIPIYGQSISAMFGFYLCEGPVRNFEEAKSSDTELFSKIHRLMLQKGVYLAPSAFEAGFTSLAHSEDDINATIKAFKEIFSEMS.

An N6-(pyridoxal phosphate)lysine modification is found at K271.

The protein belongs to the class-III pyridoxal-phosphate-dependent aminotransferase family. HemL subfamily. Homodimer. The cofactor is pyridoxal 5'-phosphate.

The protein resides in the cytoplasm. The enzyme catalyses (S)-4-amino-5-oxopentanoate = 5-aminolevulinate. It participates in porphyrin-containing compound metabolism; protoporphyrin-IX biosynthesis; 5-aminolevulinate from L-glutamyl-tRNA(Glu): step 2/2. The protein operates within porphyrin-containing compound metabolism; chlorophyll biosynthesis. This chain is Glutamate-1-semialdehyde 2,1-aminomutase, found in Prochlorococcus marinus (strain NATL2A).